The sequence spans 454 residues: (Z)-3-hexen-1-ol acetyltransferase (454 aa).

Residues His-174 and Asp-389 each act as proton acceptor in the active site.

This sequence belongs to the plant acyltransferase family. Expressed in leaves and stems. Lower levels in flowers and barely detected in roots and siliques.

It catalyses the reaction (3Z)-hex-3-en-1-ol + acetyl-CoA = (3Z)-hex-3-en-1-yl acetate + CoA. Its activity is regulated as follows. Inhibited by magnesium, calcium, cobalt, zinc and copper. Functionally, acyltransferase involved in the production of green leaf volatiles (GLVs). Uses acetyl-CoA as substrate, but not malonyl-CoA or benzoyl-CoA. Prefers primary, medium-chain-length, aliphatic alcohols. In Arabidopsis thaliana (Mouse-ear cress), this protein is (Z)-3-hexen-1-ol acetyltransferase (CHAT).